Reading from the N-terminus, the 156-residue chain is Small ribosomal subunit protein uS7 (156 aa).

It belongs to the universal ribosomal protein uS7 family. As to quaternary structure, part of the 30S ribosomal subunit. Contacts proteins S9 and S11.

Functionally, one of the primary rRNA binding proteins, it binds directly to 16S rRNA where it nucleates assembly of the head domain of the 30S subunit. Is located at the subunit interface close to the decoding center, probably blocks exit of the E-site tRNA. This is Small ribosomal subunit protein uS7 from Pediococcus pentosaceus (strain ATCC 25745 / CCUG 21536 / LMG 10740 / 183-1w).